The chain runs to 618 residues: Chaperone protein DnaK (618 aa).

Thr175 is modified (phosphothreonine; by autocatalysis). Residues 579 to 618 form a disordered region; it reads GAPGAEGFDSNMAGEANAGQNANNDDNVVDADYKVEDDEK. Residues 591-604 show a composition bias toward low complexity; it reads AGEANAGQNANNDD.

Belongs to the heat shock protein 70 family.

Acts as a chaperone. In Clostridium tetani (strain Massachusetts / E88), this protein is Chaperone protein DnaK.